The chain runs to 215 residues: UPF0323 lipoprotein HP_0232 (215 aa).

The first 27 residues, 1 to 27, serve as a signal peptide directing secretion; it reads MKKPYRKISDYAIVGGLSALVMVSIVG. The N-palmitoyl cysteine moiety is linked to residue C28. A lipid anchor (S-diacylglycerol cysteine) is attached at C28. Positions 158 to 169 are enriched in polar residues; the sequence is QRTYKSPQAYQR. Positions 158-215 are disordered; that stretch reads QRTYKSPQAYQRSQNSFSKSAPSASSMGGASKGQSGFFGSSRPTSSPAVSSGTRGFNS. The span at 170-208 shows a compositional bias: low complexity; that stretch reads SQNSFSKSAPSASSMGGASKGQSGFFGSSRPTSSPAVSS.

The protein belongs to the UPF0323 family.

It is found in the cell membrane. This chain is UPF0323 lipoprotein HP_0232, found in Helicobacter pylori (strain ATCC 700392 / 26695) (Campylobacter pylori).